A 1086-amino-acid chain; its full sequence is Auxin response factor 19 (1086 aa).

The segment at residues 126-228 (FCKTLTASDT…QLMLGIRRAN (103 aa)) is a DNA-binding region (TF-B3). Residues 454–485 (PSKLLNFQSPNLSSANSQFNKPNTVNHISQQM) are compositionally biased toward polar residues. 4 disordered regions span residues 454-504 (PSKL…QQQQ), 545-564 (QSPNQPTGFSQSQLQQQSML), 624-647 (LSQNPQQLQMQQQSSKPSPSQQLQ), and 659-788 (QQQS…SVFE). A compositionally biased stretch (low complexity) spans 486 to 504 (QAQPAMVKSQQQQQQQQQQ). Residues 659-697 (QQQSIPPVSSSLQPQLSALQQTQSHQLQQLLSSQNQQPL) are compositionally biased toward low complexity. Polar residues predominate over residues 700–710 (GNNSFPASTFM). The span at 711–724 (QPPQIQVSPQQQGQ) shows a compositional bias: low complexity. A compositionally biased stretch (polar residues) spans 747-771 (SCSTSPSANNTGHDNVSPTNFLSRN). The span at 772-785 (QQQGQAASVSASDS) shows a compositional bias: low complexity. In terms of domain architecture, PB1 spans 958–1051 (RTYTKVQKRG…EVQQMSLDGD (94 aa)).

This sequence belongs to the ARF family. In terms of assembly, homodimers and heterodimers. Interacts with the auxin-responsive protein IAA1. Binds to JMJ30. Binds to ATXR2 in the nucleus.

It is found in the nucleus. Auxin response factors (ARFs) are transcriptional factors that bind specifically to the DNA sequence 5'-TGTCTC-3' found in the auxin-responsive promoter elements (AuxREs). Could act as transcriptional activator or repressor. Formation of heterodimers with Aux/IAA proteins may alter their ability to modulate early auxin response genes expression. Involved in ethylene responses. Regulates lateral root formation through direct regulation of LBD16 and/or LBD29. Functionally redundant with ARF7. Involved in cellular dedifferentiation during callus formation on callus-inducing medium (CIM) and in an ATXR2-dependent manner. The protein is Auxin response factor 19 of Arabidopsis thaliana (Mouse-ear cress).